The primary structure comprises 509 residues: Oligo-1,6-glucosidase (509 aa).

The active-site Nucleophile is the Asp-198. Residue Glu-254 is the Proton donor of the active site.

It belongs to the glycosyl hydrolase 13 family.

Its subcellular location is the cytoplasm. It carries out the reaction Hydrolysis of (1-&gt;6)-alpha-D-glucosidic linkages in some oligosaccharides produced from starch and glycogen by alpha-amylase, and in isomaltose.. This is Oligo-1,6-glucosidase (malL) from Bacillus sp. (strain F5).